Consider the following 437-residue polypeptide: Enolase (437 aa).

(2R)-2-phosphoglycerate is bound at residue Gln-162. Residue Glu-204 is the Proton donor of the active site. Asp-251, Glu-297, and Asp-324 together coordinate Mg(2+). Positions 349, 378, 379, and 400 each coordinate (2R)-2-phosphoglycerate. The active-site Proton acceptor is the Lys-349.

It belongs to the enolase family. Mg(2+) is required as a cofactor.

The protein localises to the cytoplasm. It is found in the secreted. It localises to the cell surface. The enzyme catalyses (2R)-2-phosphoglycerate = phosphoenolpyruvate + H2O. It functions in the pathway carbohydrate degradation; glycolysis; pyruvate from D-glyceraldehyde 3-phosphate: step 4/5. Its function is as follows. Catalyzes the reversible conversion of 2-phosphoglycerate (2-PG) into phosphoenolpyruvate (PEP). It is essential for the degradation of carbohydrates via glycolysis. The chain is Enolase from Prosthecochloris aestuarii (strain DSM 271 / SK 413).